The primary structure comprises 445 residues: Flagellum-associated coiled-coil domain-containing protein 1 (445 aa).

Residues Pro-26–Lys-47 form a disordered region. Positions Arg-30–Leu-39 are enriched in polar residues. 2 coiled-coil regions span residues Ser-122–Asp-226 and Ala-283–Val-315. Position 376 is an N6-acetyllysine (Lys-376). Positions Glu-387–Ile-414 form a coiled coil.

The protein resides in the cytoplasm. It localises to the cytoplasmic granule. Its subcellular location is the cell projection. It is found in the cilium. The protein localises to the flagellum. This chain is Flagellum-associated coiled-coil domain-containing protein 1, found in Homo sapiens (Human).